The following is a 185-amino-acid chain: Photosystem I assembly protein Ycf4 (185 aa).

2 helical membrane passes run 22-42 (FFFA…GFSS) and 57-77 (IIFV…LFFS).

This sequence belongs to the Ycf4 family.

It is found in the plastid. The protein localises to the chloroplast thylakoid membrane. In terms of biological role, seems to be required for the assembly of the photosystem I complex. This chain is Photosystem I assembly protein Ycf4, found in Welwitschia mirabilis (Tree tumbo).